The primary structure comprises 321 residues: Glycerol-3-phosphate dehydrogenase [NAD(P)+] (321 aa).

NADPH contacts are provided by S10, F11, R31, R32, and K104. Sn-glycerol 3-phosphate is bound by residues K104 and G132. A136 lines the NADPH pocket. K186, D238, S248, R249, and N250 together coordinate sn-glycerol 3-phosphate. K186 acts as the Proton acceptor in catalysis. R249 provides a ligand contact to NADPH. E272 serves as a coordination point for NADPH.

Belongs to the NAD-dependent glycerol-3-phosphate dehydrogenase family.

It is found in the cytoplasm. The enzyme catalyses sn-glycerol 3-phosphate + NAD(+) = dihydroxyacetone phosphate + NADH + H(+). It catalyses the reaction sn-glycerol 3-phosphate + NADP(+) = dihydroxyacetone phosphate + NADPH + H(+). Its function is as follows. Catalyzes the reduction of the glycolytic intermediate dihydroxyacetone phosphate (DHAP) to sn-glycerol 3-phosphate (G3P). The sequence is that of Glycerol-3-phosphate dehydrogenase [NAD(P)+] from Methanothermobacter thermautotrophicus (strain ATCC 29096 / DSM 1053 / JCM 10044 / NBRC 100330 / Delta H) (Methanobacterium thermoautotrophicum).